Reading from the N-terminus, the 213-residue chain is Protein MobE (213 aa).

This is Protein MobE (mobE) from Acidithiobacillus ferrooxidans (Thiobacillus ferrooxidans).